The primary structure comprises 157 residues: MKVLEGAVAAPNAKIAVVIARFNSFINESLLEGALDALKRLGQVKEENITLVRVPGAYELPLVARRLAESKKYDGIVALGTVIRGGTAHFEYVAGEASSGLGQVAMNADIPVAFGVLTTENIEQAIERAGTKAGNKGAEAALVALEMVNLLAQIDAA.

Residues phenylalanine 22, 57-59 (AYE), and 81-83 (TVI) contribute to the 5-amino-6-(D-ribitylamino)uracil site. 86 to 87 (GT) contacts (2S)-2-hydroxy-3-oxobutyl phosphate. The active-site Proton donor is the histidine 89. Phenylalanine 114 serves as a coordination point for 5-amino-6-(D-ribitylamino)uracil. Arginine 128 contacts (2S)-2-hydroxy-3-oxobutyl phosphate.

It belongs to the DMRL synthase family. As to quaternary structure, forms an icosahedral capsid composed of 60 subunits, arranged as a dodecamer of pentamers.

The enzyme catalyses (2S)-2-hydroxy-3-oxobutyl phosphate + 5-amino-6-(D-ribitylamino)uracil = 6,7-dimethyl-8-(1-D-ribityl)lumazine + phosphate + 2 H2O + H(+). The protein operates within cofactor biosynthesis; riboflavin biosynthesis; riboflavin from 2-hydroxy-3-oxobutyl phosphate and 5-amino-6-(D-ribitylamino)uracil: step 1/2. Functionally, catalyzes the formation of 6,7-dimethyl-8-ribityllumazine by condensation of 5-amino-6-(D-ribitylamino)uracil with 3,4-dihydroxy-2-butanone 4-phosphate. This is the penultimate step in the biosynthesis of riboflavin. The polypeptide is 6,7-dimethyl-8-ribityllumazine synthase (Pasteurella multocida (strain Pm70)).